The chain runs to 60 residues: Large ribosomal subunit protein uL30 (60 aa).

Belongs to the universal ribosomal protein uL30 family. In terms of assembly, part of the 50S ribosomal subunit.

This Desulforapulum autotrophicum (strain ATCC 43914 / DSM 3382 / VKM B-1955 / HRM2) (Desulfobacterium autotrophicum) protein is Large ribosomal subunit protein uL30.